The primary structure comprises 616 residues: tRNA uridine 5-carboxymethylaminomethyl modification enzyme MnmG (616 aa).

Residues 10 to 15, valine 122, and serine 177 contribute to the FAD site; that span reads GAGHAG. Position 271–285 (271–285) interacts with NAD(+); sequence GPRYCPSIEDKVVRF. Glutamine 368 serves as a coordination point for FAD.

It belongs to the MnmG family. In terms of assembly, homodimer. Heterotetramer of two MnmE and two MnmG subunits. The cofactor is FAD.

It localises to the cytoplasm. In terms of biological role, NAD-binding protein involved in the addition of a carboxymethylaminomethyl (cmnm) group at the wobble position (U34) of certain tRNAs, forming tRNA-cmnm(5)s(2)U34. This is tRNA uridine 5-carboxymethylaminomethyl modification enzyme MnmG from Malacoplasma penetrans (strain HF-2) (Mycoplasma penetrans).